Consider the following 138-residue polypeptide: Large ribosomal subunit protein uL16 (138 aa).

A disordered region spans residues 1–29; the sequence is MSLLQPRKVKWRKPQKGRTKGKATRRNQV. Residues 7 to 25 are compositionally biased toward basic residues; the sequence is RKVKWRKPQKGRTKGKATR.

It belongs to the universal ribosomal protein uL16 family. In terms of assembly, part of the 50S ribosomal subunit.

Functionally, binds 23S rRNA and is also seen to make contacts with the A and possibly P site tRNAs. The chain is Large ribosomal subunit protein uL16 from Sulfurihydrogenibium sp. (strain YO3AOP1).